A 140-amino-acid polypeptide reads, in one-letter code: Alpha-lactalbumin (140 aa).

Residues 1 to 19 (MMSLLPLLLIGIVLPATQA) form the signal peptide. In terms of domain architecture, C-type lysozyme spans 20-140 (KDYGKCELNQ…CRENLDQWNC (121 aa)). 4 cysteine pairs are disulfide-bonded: cysteine 25/cysteine 140, cysteine 47/cysteine 131, cysteine 80/cysteine 96, and cysteine 92/cysteine 110. Ca(2+) contacts are provided by lysine 98, aspartate 101, aspartate 103, aspartate 106, and aspartate 107.

Lactose synthase (LS) is a heterodimer of a catalytic component, beta1,4-galactosyltransferase (beta4Gal-T1) and a regulatory component, alpha-lactalbumin (LA). In terms of tissue distribution, mammary gland specific. Secreted in milk.

It localises to the secreted. Regulatory subunit of lactose synthase, changes the substrate specificity of galactosyltransferase in the mammary gland making glucose a good acceptor substrate for this enzyme. This enables LS to synthesize lactose, the major carbohydrate component of milk. In other tissues, galactosyltransferase transfers galactose onto the N-acetylglucosamine of the oligosaccharide chains in glycoproteins. In Trichosurus vulpecula (Brush-tailed possum), this protein is Alpha-lactalbumin (LALBA).